Reading from the N-terminus, the 72-residue chain is Translation initiation factor IF-1 (72 aa).

Positions M1 to K72 constitute an S1-like domain.

This sequence belongs to the IF-1 family. As to quaternary structure, component of the 30S ribosomal translation pre-initiation complex which assembles on the 30S ribosome in the order IF-2 and IF-3, IF-1 and N-formylmethionyl-tRNA(fMet); mRNA recruitment can occur at any time during PIC assembly.

The protein resides in the cytoplasm. Functionally, one of the essential components for the initiation of protein synthesis. Stabilizes the binding of IF-2 and IF-3 on the 30S subunit to which N-formylmethionyl-tRNA(fMet) subsequently binds. Helps modulate mRNA selection, yielding the 30S pre-initiation complex (PIC). Upon addition of the 50S ribosomal subunit IF-1, IF-2 and IF-3 are released leaving the mature 70S translation initiation complex. This is Translation initiation factor IF-1 from Campylobacter jejuni subsp. doylei (strain ATCC BAA-1458 / RM4099 / 269.97).